A 196-amino-acid polypeptide reads, in one-letter code: Ribonuclease HII (196 aa).

Residues 9 to 196 (SLIAGVDEVG…APVKRAIGLK (188 aa)) enclose the RNase H type-2 domain. 3 residues coordinate a divalent metal cation: D15, E16, and D107.

It belongs to the RNase HII family. Requires Mn(2+) as cofactor. The cofactor is Mg(2+).

Its subcellular location is the cytoplasm. The catalysed reaction is Endonucleolytic cleavage to 5'-phosphomonoester.. Its function is as follows. Endonuclease that specifically degrades the RNA of RNA-DNA hybrids. In Photorhabdus laumondii subsp. laumondii (strain DSM 15139 / CIP 105565 / TT01) (Photorhabdus luminescens subsp. laumondii), this protein is Ribonuclease HII.